The sequence spans 104 residues: MEKYAFKMQLTPGCLAEYRKRHDEIWPELVDLLHQAGVSDYSIHLDEETGILFGVLWRTADHSMDALPDHPVMQRWWAHMADIMETHPDNEPKAVPLTPVFHMP.

Residue tyrosine 18 coordinates substrate. The active-site Proton donor is histidine 22. Substrate contacts are provided by residues tyrosine 41 and 76–77; that span reads WW.

It belongs to the rhamnose mutarotase family. As to quaternary structure, homodimer.

The protein resides in the cytoplasm. The enzyme catalyses alpha-L-rhamnose = beta-L-rhamnose. It functions in the pathway carbohydrate metabolism; L-rhamnose metabolism. Functionally, involved in the anomeric conversion of L-rhamnose. The polypeptide is L-rhamnose mutarotase (Jannaschia sp. (strain CCS1)).